Consider the following 1770-residue polypeptide: U3 small nucleolar RNA-associated protein 10 (1770 aa).

2 helical membrane passes run I499–S519 and L528–A548. The HEAT repeat unit spans residues M1730 to Y1768.

It belongs to the HEATR1/UTP10 family. Component of the ribosomal small subunit (SSU) processome.

The protein resides in the nucleus. It is found in the nucleolus. It localises to the membrane. Involved in nucleolar processing of pre-18S ribosomal RNA. Involved in ribosome biosynthesis. The protein is U3 small nucleolar RNA-associated protein 10 of Candida glabrata (strain ATCC 2001 / BCRC 20586 / JCM 3761 / NBRC 0622 / NRRL Y-65 / CBS 138) (Yeast).